The sequence spans 871 residues: Patatin-like phospholipase domain-containing protein CNBE2340 (871 aa).

Residues 20 to 53 (NEDSPLSPRSFSLPPESPQLSTASPIHQRVSRKR) are disordered. The span at 23–33 (SPLSPRSFSLP) shows a compositional bias: low complexity. A helical transmembrane segment spans residues 68–88 (WPLLFFIFFIIYLEFSAYVIT). One can recognise a PNPLA domain in the interval 243-435 (LCLSGGASFG…REDIPLGSLH (193 aa)). Positions 274-278 (GTSAG) match the GXSXG motif. Ser-276 acts as the Nucleophile in catalysis. The Proton acceptor role is filled by Asp-422. Disordered regions lie at residues 586–707 (ALSH…NFGD), 720–748 (LSSP…QRFR), and 760–871 (VSES…QDGA). Polar residues-rich tracts occupy residues 594-606 (NDPA…TNPE) and 687-706 (PTHS…SNFG). Positions 721–748 (SSPFRSIRSNTSSSSNNVQSPSSSQRFR) are enriched in low complexity. Positions 798-820 (VESHSDRSEDEMLHSGANVKEEY) are enriched in basic and acidic residues.

The protein belongs to the PLPL family.

The protein localises to the membrane. Its function is as follows. Probable lipid hydrolase. In Cryptococcus neoformans var. neoformans serotype D (strain B-3501A) (Filobasidiella neoformans), this protein is Patatin-like phospholipase domain-containing protein CNBE2340.